Here is a 156-residue protein sequence, read N- to C-terminus: Small ribosomal subunit protein uS7 (156 aa).

This sequence belongs to the universal ribosomal protein uS7 family. Part of the 30S ribosomal subunit. Contacts proteins S9 and S11.

One of the primary rRNA binding proteins, it binds directly to 16S rRNA where it nucleates assembly of the head domain of the 30S subunit. Is located at the subunit interface close to the decoding center, probably blocks exit of the E-site tRNA. This Synechococcus sp. (strain CC9311) protein is Small ribosomal subunit protein uS7.